The primary structure comprises 767 residues: Polyketide biosynthesis protein PksE (767 aa).

The tract at residues 1-312 is acyl transferase; sequence MITYVFPGQG…QRNVQAGITA (312 aa). Residues Ser-87 and His-193 contribute to the active site.

The protein in the N-terminal section; belongs to the FabD family.

The protein localises to the cytoplasm. It carries out the reaction holo-[ACP] + malonyl-CoA = malonyl-[ACP] + CoA. The protein operates within antibiotic biosynthesis; bacillaene biosynthesis. In terms of biological role, probably involved in some intermediate steps for the synthesis of the antibiotic polyketide bacillaene which is involved in secondary metabolism. Probably has an acyl transferase activity and could also have a flavin mononucleotide-dependent oxidoreductase activity. The sequence is that of Polyketide biosynthesis protein PksE (pksE) from Bacillus subtilis (strain 168).